The following is a 204-amino-acid chain: FMN-dependent NADH:quinone oxidoreductase (204 aa).

FMN is bound by residues serine 9, 15–17, and 97–100; these read SVS and MYNF.

This sequence belongs to the azoreductase type 1 family. Homodimer. FMN serves as cofactor.

It catalyses the reaction 2 a quinone + NADH + H(+) = 2 a 1,4-benzosemiquinone + NAD(+). The catalysed reaction is N,N-dimethyl-1,4-phenylenediamine + anthranilate + 2 NAD(+) = 2-(4-dimethylaminophenyl)diazenylbenzoate + 2 NADH + 2 H(+). In terms of biological role, quinone reductase that provides resistance to thiol-specific stress caused by electrophilic quinones. Its function is as follows. Also exhibits azoreductase activity. Catalyzes the reductive cleavage of the azo bond in aromatic azo compounds to the corresponding amines. In Methylobacterium radiotolerans (strain ATCC 27329 / DSM 1819 / JCM 2831 / NBRC 15690 / NCIMB 10815 / 0-1), this protein is FMN-dependent NADH:quinone oxidoreductase.